Here is a 297-residue protein sequence, read N- to C-terminus: Formylmethanofuran--tetrahydromethanopterin formyltransferase (297 aa).

It belongs to the FTR family. As to quaternary structure, homotetramer.

It localises to the cytoplasm. It catalyses the reaction N-formylmethanofuran + 5,6,7,8-tetrahydromethanopterin + H(+) = N(5)-formyl-5,6,7,8-tetrahydromethanopterin + methanofuran. The protein operates within one-carbon metabolism; methanogenesis from CO(2); 5,10-methenyl-5,6,7,8-tetrahydromethanopterin from CO(2): step 2/3. Catalyzes the reversible transfer of a formyl group from formylmethanofuran (formyl-MFR) to tetrahydromethanopterin (H(4)MPT) to produce 5-formyl tetrahydromethanopterin (5-formyl-H(4)MPT) and methanofuran (MFR). This chain is Formylmethanofuran--tetrahydromethanopterin formyltransferase, found in Methanothermobacter thermautotrophicus (strain ATCC 29096 / DSM 1053 / JCM 10044 / NBRC 100330 / Delta H) (Methanobacterium thermoautotrophicum).